The following is a 204-amino-acid chain: Probable nicotinate-nucleotide adenylyltransferase (204 aa).

The protein belongs to the NadD family.

It carries out the reaction nicotinate beta-D-ribonucleotide + ATP + H(+) = deamido-NAD(+) + diphosphate. Its pathway is cofactor biosynthesis; NAD(+) biosynthesis; deamido-NAD(+) from nicotinate D-ribonucleotide: step 1/1. In terms of biological role, catalyzes the reversible adenylation of nicotinate mononucleotide (NaMN) to nicotinic acid adenine dinucleotide (NaAD). This is Probable nicotinate-nucleotide adenylyltransferase from Mycolicibacterium gilvum (strain PYR-GCK) (Mycobacterium gilvum (strain PYR-GCK)).